The following is a 901-amino-acid chain: MLIPSKLSRPVRLDHTVVRERLLAKLSGANNFRLALITSPAGYGKTTLISQWAAGKNDIGWYSLDEGDNQQERFASYLIAAVQQATNGHCAICETMAQKRQYASLTSLFAQLFIELAEWHSPLYLVIDDYHLITNPVIHESMRFFIRHQPENLTLVVLSRNLPQLGIANLRVRDQLLEIGSQQLAFTHQEAKQFFDCRLSSPIEAAESSRICDDVSGWATALQLIALSARQNTHSAHKSARRLAGINASHLSDYLVDEVLDNVDLATRHFLLKSAILRSMNDALINRVTGEENGQMRLEEIERQGLFLQRMDDTGEWFCYHPLFGNFLRQRCQWELAAELPEIHRAAAESWMAQGFPSEAIHHALAAGDALMLRDILLNHAWSLFNHSELSLLEESLKALPWDSLLENPQLVLLQAWLMQSQHRYGEVNTLLARAEHEIKDIREGTMHAEFNALRAQVAINDGNPDEAERLAKLALEELPPGWFYSRIVATSVLGEVLHCKGELTRSLALMQQTEQMARQHDVWHYALWSLIQQSEILFAQGFLQTAWETQEKAFQLINEQHLEQLPMHEFLVRIRAQLLWAWARLDEAEASARSGIEVLSSYQPQQQLQCLAMLIQCSLARGDLDNARSQLNRLENLLGNGKYHSDWISNANKVRVIYWQMTGDKAAAANWLRHTAKPEFANNHFLQGQWRNIARAQILLGEFEPAEIVLEELNENARSLRLMSDLNRNLLLLNQLYWQAGRKSDAQRVLLDALKLANRTGFISHFVIEGEAMAQQLRQLIQLNTLPELEQHRAQRILREINQHHRHKFAHFDENFVERLLNHPEVPELIRTSPLTQREWQVLGLIYSGYSNEQIAGELEVAATTIKTHIRNLYQKLGVAHRQAAVQHAQKLLKMMGYGV.

39–46 (SPAGYGKT) serves as a coordination point for ATP. In terms of domain architecture, HTH luxR-type spans 829 to 894 (ELIRTSPLTQ…AAVQHAQKLL (66 aa)). Positions 853-872 (NEQIAGELEVAATTIKTHIR) form a DNA-binding region, H-T-H motif.

The protein belongs to the MalT family. Monomer in solution. Oligomerizes to an active state in the presence of the positive effectors ATP and maltotriose.

With respect to regulation, activated by ATP and maltotriose, which are both required for DNA binding. Positively regulates the transcription of the maltose regulon whose gene products are responsible for uptake and catabolism of malto-oligosaccharides. Specifically binds to the promoter region of its target genes, recognizing a short DNA motif called the MalT box. The protein is HTH-type transcriptional regulator MalT of Escherichia coli O7:K1 (strain IAI39 / ExPEC).